The chain runs to 109 residues: Small ribosomal subunit protein uS10 (109 aa).

It belongs to the universal ribosomal protein uS10 family. In terms of assembly, part of the 30S ribosomal subunit.

Involved in the binding of tRNA to the ribosomes. This chain is Small ribosomal subunit protein uS10, found in Nanoarchaeum equitans (strain Kin4-M).